The following is an 817-amino-acid chain: Protein kintoun (817 aa).

Disordered regions lie at residues 233–259 (AESTARSPASPAPKAVQRPEPTEPRCS), 385–404 (AGAREESADSSGADHGRKSC), 410–445 (AGTAKAEGELVPEPEQDFGGDSVTPLGPGEGTTPEN), and 473–503 (VQTSEEQEGTCHDTSGSDMGGPGTESIKPLC). Positions 386–401 (GAREESADSSGADHGR) are enriched in basic and acidic residues. Phosphoserine is present on residues S622 and S631. Positions 653–692 (ECSDPDGLQGKEKGVKEECPLSEKENTEHSTTSTADSNSS) are disordered. Residues 661–680 (QGKEKGVKEECPLSEKENTE) show a composition bias toward basic and acidic residues. Over residues 681-692 (HSTTSTADSNSS) the composition is skewed to polar residues.

It belongs to the PIH1 family. Kintoun subfamily. As to quaternary structure, interacts with CFAP300. Interacts with DNAI2 and HSPA1A. Interacts with DNAAF4. Interacts with DNAAF6/PIH1D3.

The protein localises to the cytoplasm. It localises to the dynein axonemal particle. Required for cytoplasmic pre-assembly of axonemal dyneins, thereby playing a central role in motility in cilia and flagella. Involved in pre-assembly of dynein arm complexes in the cytoplasm before intraflagellar transport loads them for the ciliary compartment. The sequence is that of Protein kintoun from Rattus norvegicus (Rat).